The chain runs to 541 residues: MARQEQQQHLQVLSALDAAKTQWYHFTAIVVAGMGFFTDAYDLFCISLVTKLLGRIYYTDLAKENPGSLPPNVAAAVNGVAFCGTLAGQLFFGWLGDKLGRKSVYGMTLLMMVICSIASGLSFSHTPTSVMATLCFFRFWLGFGIGGDYPLSATIMSEYANKKTRGAFIAAVFAMQGFGILAGGIVTLIISSAFRAGFPAPAYQDDRAGSTVRQADYVWRIILMLGAMPALLTYYWRMKMPETARYTALVAKNAKQAAADMSKVLQVEIQEEQDKLEQMVTRNSSSFGLFSRQFARRHGLHLVGTATTWFLLDIAFYSQNLFQKDIFTSINWIPKAKTMSALEEVFRIARAQTLIALCGTVPGYWFTVFLIDIVGRFAIQLLGFFMMTVFMLGLAVPYHHWTTKGNHIGFVVMYAFTFFFANFGPNSTTFIVPAEIFPARLRSTCHGISAAAGKAGAIIGSFGFLYAAQDPHKPDAGYKPGIGVRNSLFVLAGCNLLGFICTFLVPESKGKSLEEMSGEAEDDDDEVAAAGGGAAVRPQTA.

Over 1–28 (MARQEQQQHLQVLSALDAAKTQWYHFTA) the chain is Cytoplasmic. Residues 29–49 (IVVAGMGFFTDAYDLFCISLV) traverse the membrane as a helical segment. At 50–74 (TKLLGRIYYTDLAKENPGSLPPNVA) the chain is on the extracellular side. A helical transmembrane segment spans residues 75 to 95 (AAVNGVAFCGTLAGQLFFGWL). The Cytoplasmic portion of the chain corresponds to 96-102 (GDKLGRK). The helical transmembrane segment at 103 to 123 (SVYGMTLLMMVICSIASGLSF) threads the bilayer. The Extracellular segment spans residues 124–126 (SHT). Residues 127–147 (PTSVMATLCFFRFWLGFGIGG) form a helical membrane-spanning segment. At 148–168 (DYPLSATIMSEYANKKTRGAF) the chain is on the cytoplasmic side. A helical transmembrane segment spans residues 169-189 (IAAVFAMQGFGILAGGIVTLI). At 190-215 (ISSAFRAGFPAPAYQDDRAGSTVRQA) the chain is on the extracellular side. Residues 216 to 236 (DYVWRIILMLGAMPALLTYYW) traverse the membrane as a helical segment. Topologically, residues 237 to 297 (RMKMPETARY…GLFSRQFARR (61 aa)) are cytoplasmic. Residues 298 to 318 (HGLHLVGTATTWFLLDIAFYS) form a helical membrane-spanning segment. Over 319 to 353 (QNLFQKDIFTSINWIPKAKTMSALEEVFRIARAQT) the chain is Extracellular. The helical transmembrane segment at 354-374 (LIALCGTVPGYWFTVFLIDIV) threads the bilayer. Topologically, residues 375–376 (GR) are cytoplasmic. The helical transmembrane segment at 377-397 (FAIQLLGFFMMTVFMLGLAVP) threads the bilayer. Topologically, residues 398-404 (YHHWTTK) are extracellular. A helical membrane pass occupies residues 405-425 (GNHIGFVVMYAFTFFFANFGP). The Cytoplasmic portion of the chain corresponds to 426–447 (NSTTFIVPAEIFPARLRSTCHG). A helical transmembrane segment spans residues 448 to 468 (ISAAAGKAGAIIGSFGFLYAA). Topologically, residues 469–486 (QDPHKPDAGYKPGIGVRN) are extracellular. Residues 487–507 (SLFVLAGCNLLGFICTFLVPE) traverse the membrane as a helical segment. Topologically, residues 508–541 (SKGKSLEEMSGEAEDDDDEVAAAGGGAAVRPQTA) are cytoplasmic. Residues 514-541 (EEMSGEAEDDDDEVAAAGGGAAVRPQTA) are disordered. The segment covering 516–527 (MSGEAEDDDDEV) has biased composition (acidic residues).

It belongs to the major facilitator superfamily. Phosphate:H(+) symporter (TC 2.A.1.9) family.

The protein resides in the membrane. High-affinity transporter for external inorganic phosphate. The chain is Probable inorganic phosphate transporter 1-8 (PHT1-8) from Oryza sativa subsp. japonica (Rice).